The sequence spans 278 residues: Shikimate dehydrogenase (NADP(+)) (278 aa).

Shikimate-binding positions include 14–16 (SKS) and threonine 61. Lysine 65 functions as the Proton acceptor in the catalytic mechanism. Shikimate is bound by residues asparagine 86 and aspartate 102. Residues 127-131 (GAGGA), 151-156 (NRTASK), and methionine 221 each bind NADP(+). Tyrosine 223 contacts shikimate. Glycine 245 contributes to the NADP(+) binding site.

This sequence belongs to the shikimate dehydrogenase family. As to quaternary structure, homodimer.

It catalyses the reaction shikimate + NADP(+) = 3-dehydroshikimate + NADPH + H(+). It participates in metabolic intermediate biosynthesis; chorismate biosynthesis; chorismate from D-erythrose 4-phosphate and phosphoenolpyruvate: step 4/7. Functionally, involved in the biosynthesis of the chorismate, which leads to the biosynthesis of aromatic amino acids. Catalyzes the reversible NADPH linked reduction of 3-dehydroshikimate (DHSA) to yield shikimate (SA). The polypeptide is Shikimate dehydrogenase (NADP(+)) (Saccharophagus degradans (strain 2-40 / ATCC 43961 / DSM 17024)).